Reading from the N-terminus, the 85-residue chain is Large ribosomal subunit protein bL27 (85 aa).

The protein belongs to the bacterial ribosomal protein bL27 family.

In Campylobacter curvus (strain 525.92), this protein is Large ribosomal subunit protein bL27.